The following is a 122-amino-acid chain: Small ribosomal subunit protein uS13 (122 aa).

The segment at 99–122 (RGQRTHTNARTRKGPAKAIAGKKK) is disordered.

This sequence belongs to the universal ribosomal protein uS13 family. As to quaternary structure, part of the 30S ribosomal subunit. Forms a loose heterodimer with protein S19. Forms two bridges to the 50S subunit in the 70S ribosome.

Functionally, located at the top of the head of the 30S subunit, it contacts several helices of the 16S rRNA. In the 70S ribosome it contacts the 23S rRNA (bridge B1a) and protein L5 of the 50S subunit (bridge B1b), connecting the 2 subunits; these bridges are implicated in subunit movement. Contacts the tRNAs in the A and P-sites. This chain is Small ribosomal subunit protein uS13, found in Rhizobium meliloti (strain 1021) (Ensifer meliloti).